The sequence spans 416 residues: Multifunctional CCA protein (416 aa).

ATP-binding residues include glycine 8 and arginine 11. Residues glycine 8 and arginine 11 each contribute to the CTP site. Aspartate 21 and aspartate 23 together coordinate Mg(2+). Arginine 91, arginine 137, and arginine 140 together coordinate ATP. Residues arginine 91, arginine 137, and arginine 140 each coordinate CTP. The region spanning 228–329 (TGVHTLMVLA…VKIFDKADFW (102 aa)) is the HD domain.

The protein belongs to the tRNA nucleotidyltransferase/poly(A) polymerase family. Bacterial CCA-adding enzyme type 1 subfamily. Monomer. Can also form homodimers and oligomers. It depends on Mg(2+) as a cofactor. Requires Ni(2+) as cofactor.

The enzyme catalyses a tRNA precursor + 2 CTP + ATP = a tRNA with a 3' CCA end + 3 diphosphate. It carries out the reaction a tRNA with a 3' CCA end + 2 CTP + ATP = a tRNA with a 3' CCACCA end + 3 diphosphate. Functionally, catalyzes the addition and repair of the essential 3'-terminal CCA sequence in tRNAs without using a nucleic acid template. Adds these three nucleotides in the order of C, C, and A to the tRNA nucleotide-73, using CTP and ATP as substrates and producing inorganic pyrophosphate. tRNA 3'-terminal CCA addition is required both for tRNA processing and repair. Also involved in tRNA surveillance by mediating tandem CCA addition to generate a CCACCA at the 3' terminus of unstable tRNAs. While stable tRNAs receive only 3'-terminal CCA, unstable tRNAs are marked with CCACCA and rapidly degraded. The chain is Multifunctional CCA protein from Shewanella baltica (strain OS185).